Here is a 200-residue protein sequence, read N- to C-terminus: MAAQVDAVILAGGMARRMGGNDKGLVELLNRPMIEHAIERIKPQVKEILINANRNQNRYSEFGFKVFSDQDSGYLGPLAGMITAMSNTDAEYLLVVPCDCPLLPTDLVARMLAKLTAEDAELAVASDGKREQPVVMLLKPSLRESMKAFLDAGERKIDFWYAKHHYVVAEFSDQPNAFVNVNTPEQKQQLGEAIANEENH.

Residues 10–12 (LAG), Lys23, Asn51, Asp69, and Asp99 each bind GTP. Mg(2+) is bound at residue Asp99.

This sequence belongs to the MobA family. Monomer. Mg(2+) serves as cofactor.

It localises to the cytoplasm. The enzyme catalyses Mo-molybdopterin + GTP + H(+) = Mo-molybdopterin guanine dinucleotide + diphosphate. Transfers a GMP moiety from GTP to Mo-molybdopterin (Mo-MPT) cofactor (Moco or molybdenum cofactor) to form Mo-molybdopterin guanine dinucleotide (Mo-MGD) cofactor. This is Molybdenum cofactor guanylyltransferase from Shewanella pealeana (strain ATCC 700345 / ANG-SQ1).